Reading from the N-terminus, the 412-residue chain is Double C2-like domain-containing protein beta (412 aa).

The interval 1 to 36 is negatively regulates targeting to plasma membrane; that stretch reads MTLRRRGEKATISIQEHMAIDVCPGPIRPIKQISDY. The tract at residues 1–90 is mediates interaction with DYNLT1; the sequence is MTLRRRGEKA…EDVDQLFGAY (90 aa). The tract at residues 38–123 is disordered; that stretch reads PRFPRGLPPD…PDADGYESDD (86 aa). Residues 49–70 show a composition bias toward low complexity; the sequence is GPRAAAPPDAPARPAVAGAGRR. Pro residues predominate over residues 95–108; that stretch reads GPSPGPSPARPPAK. Residues 112–123 are compositionally biased toward acidic residues; sequence DEPDADGYESDD. 2 C2 domains span residues 126-250 and 266-399; these read ALGT…SICL and ERGR…ERWH. Residues Asp-157, Asp-163, Asp-218, Asp-220, Asp-297, Asp-303, Asp-357, Asp-359, and Asp-365 each contribute to the Ca(2+) site. Residues 257–375 form a mediates interaction with STXBP3 region; the sequence is DKTEDKSLEE…FIGGVVLGIH (119 aa). Position 411 is a phosphoserine (Ser-411).

As to quaternary structure, interacts with the SNARE (soluble N-ethylmaleimide-sensitive factor attached protein receptor) complex composed of SNAP25, STX1A and VAMP2; the interaction is calcium-dependent and competitive with SYT1. Interacts with STX4; the interaction is calcium-dependent, increased by insulin and glucose, and mediates vesicle fusion with plasma membrane in pancreatic cells and adipocytes. Interacts with STXBP3; the interaction is direct, occurs at the cell membrane and regulates glucose-stimulated insulin secretion. May interact with UNC13A; the interaction mediates targeting to the plasma membrane. Interacts with cytoplasmic dynein light chain DYNLT1. The cofactor is Ca(2+). As to expression, widely expressed with highest levels in brain and kidney. Expressed in pancreatic islet cells (at protein level).

It localises to the cytoplasm. The protein localises to the cytoplasmic granule. It is found in the cell membrane. Functionally, calcium sensor which positively regulates SNARE-dependent fusion of vesicles with membranes. Binds phospholipids in a calcium-dependent manner and may act at the priming stage of fusion by modifying membrane curvature to stimulate fusion. Involved in calcium-triggered exocytosis in chromaffin cells and calcium-dependent spontaneous release of neurotransmitter in absence of action potentials in neuronal cells. Involved both in glucose-stimulated insulin secretion in pancreatic cells and insulin-dependent GLUT4 transport to the plasma membrane in adipocytes. The polypeptide is Double C2-like domain-containing protein beta (Homo sapiens (Human)).